The primary structure comprises 462 residues: MTEFDTIAAISTPMGEGAIAIVRLSGDQAVEIADRLFRSPSGKRLKDVPSHTIHYGHIIDPKSGRVVEEVMVSVMRAPKTFTREDVVEINCHGGFVSVNRVLQLVLANGARLAEPGEFTKRAFLNGRIDLSQAEAVIDLIRAKTDRAMNVALQQMEGRLSKLIRELRQTILETLAHVEVNIDYPEYDDVEEMTPRLLREKAEYVRGQIEKLLSTAAQGKILREGLATVIIGRPNVGKSSLLNALAHENRAIVTDIPGTTRDVIEEYVNVRGVPLRLIDTAGIRETEDVVERIGVERSQQMLKRADLILLVLNYHEPLTEEDERLFAMIEGMDAIVIVNKTDLPRRIDMERVKELAAGRPVVGTSLLHEQGIDELEKAIADLFFGGELEAGDLTYVSNSRHIALLEQAKTAIEDALAGIDAGMPVDLVQIDLRRAWELLGEIIGDTVHESLIDQLFAQFCLGK.

(6S)-5-formyl-5,6,7,8-tetrahydrofolate-binding residues include Arg23, Glu88, and Arg127. Residues 224–383 (GLATVIIGRP…LEKAIADLFF (160 aa)) form the TrmE-type G domain. A K(+)-binding site is contributed by Asn234. GTP is bound by residues 234-239 (NVGKSS), 253-259 (TDIPGTT), and 278-281 (DTAG). Ser238 is a Mg(2+) binding site. K(+)-binding residues include Thr253, Ile255, and Thr258. Thr259 is a Mg(2+) binding site. Lys462 provides a ligand contact to (6S)-5-formyl-5,6,7,8-tetrahydrofolate.

This sequence belongs to the TRAFAC class TrmE-Era-EngA-EngB-Septin-like GTPase superfamily. TrmE GTPase family. Homodimer. Heterotetramer of two MnmE and two MnmG subunits. Requires K(+) as cofactor.

The protein localises to the cytoplasm. In terms of biological role, exhibits a very high intrinsic GTPase hydrolysis rate. Involved in the addition of a carboxymethylaminomethyl (cmnm) group at the wobble position (U34) of certain tRNAs, forming tRNA-cmnm(5)s(2)U34. This chain is tRNA modification GTPase MnmE, found in Geobacillus kaustophilus (strain HTA426).